We begin with the raw amino-acid sequence, 258 residues long: MARSGFEVQKVTVEALFLREIRTRFGKFRLGYLWAILEPSAHLLILLGILGYVMHRTMPDISFPVFLLNGLIPFFIFSSISKRSIGAIEANQGLFNYRPVKPIDTIIARALLETLIYVAVYILLMLIVWMTGEYFEITNFLQLVLTWSLLIILSCGVGLIFMVVGKTFPEMQKVLPILLKPLYFISCIMFPLHSIPKQYWSYLLWNPLVHVVELSREAVMPGYISEGVSLNYLAMFTLVTLFIGLALYRTREEAMLTS.

Residues 1–30 (MARSGFEVQKVTVEALFLREIRTRFGKFRL) are Cytoplasmic-facing. Residues 30–251 (LGYLWAILEP…FIGLALYRTR (222 aa)) form the ABC transmembrane type-2 domain. Residues 31 to 54 (GYLWAILEPSAHLLILLGILGYVM) form a helical membrane-spanning segment. Residues 55–61 (HRTMPDI) are Periplasmic-facing. A helical transmembrane segment spans residues 62–81 (SFPVFLLNGLIPFFIFSSIS). Residues 82-108 (KRSIGAIEANQGLFNYRPVKPIDTIIA) are Cytoplasmic-facing. The chain crosses the membrane as a helical span at residues 109–132 (RALLETLIYVAVYILLMLIVWMTG). The Periplasmic portion of the chain corresponds to 133–143 (EYFEITNFLQL). Residues 144–165 (VLTWSLLIILSCGVGLIFMVVG) traverse the membrane as a helical segment. Residues 166 to 174 (KTFPEMQKV) lie on the Cytoplasmic side of the membrane. Residues 175–195 (LPILLKPLYFISCIMFPLHSI) form a helical membrane-spanning segment. At 196–226 (PKQYWSYLLWNPLVHVVELSREAVMPGYISE) the chain is on the periplasmic side. Residues 227 to 247 (GVSLNYLAMFTLVTLFIGLAL) form a helical membrane-spanning segment. At 248-258 (YRTREEAMLTS) the chain is on the cytoplasmic side.

The protein belongs to the ABC-2 integral membrane protein family.

It localises to the cell inner membrane. In terms of biological role, kpsM and KpsT constitute a system for the transport of polysialic acid across the cytoplasmic membrane. The polypeptide is Polysialic acid transport protein KpsM (kpsM) (Escherichia coli).